Here is a 194-residue protein sequence, read N- to C-terminus: Large ribosomal subunit protein eL15 (194 aa).

The segment at Leu162–Lys194 is disordered. The segment covering Arg167–Gly176 has biased composition (basic residues).

It belongs to the eukaryotic ribosomal protein eL15 family.

This Thermococcus onnurineus (strain NA1) protein is Large ribosomal subunit protein eL15.